A 366-amino-acid polypeptide reads, in one-letter code: Cytochrome c peroxidase, mitochondrial (366 aa).

A mitochondrion-targeting transit peptide spans 1–46 (MASAARSASRAFLRSTPTTSSFRPAVRAARFALPAQGFRAAGRRGY). His127 acts as the Proton acceptor in catalysis. His250 is a heme b binding site. Residue Trp266 is the Tryptophan radical intermediate of the active site.

Belongs to the peroxidase family. Cytochrome c peroxidase subfamily. As to quaternary structure, forms a one-to-one complex with cytochrome c. The cofactor is heme b.

It localises to the mitochondrion matrix. The protein localises to the mitochondrion intermembrane space. The catalysed reaction is 2 Fe(II)-[cytochrome c] + H2O2 + 2 H(+) = 2 Fe(III)-[cytochrome c] + 2 H2O. In terms of biological role, destroys radicals which are normally produced within the cells and which are toxic to biological systems. This is Cytochrome c peroxidase, mitochondrial (ccp1) from Aspergillus fumigatus (strain ATCC MYA-4609 / CBS 101355 / FGSC A1100 / Af293) (Neosartorya fumigata).